The following is a 128-amino-acid chain: MTSLFAQEIRLSKRHEEIVSQRLMLLQQMENKLGDQHTEKASQLQTVETAFKRNLSLLKDIEAAEKSLQTRIHPLPRPEVVSLETRYWASVEEYIPKWEQFLLGRAPYPFAVENQNEAENTIQNEAQR.

The protein resides in the cell projection. It is found in the cilium. Its function is as follows. May play a role in ciliary assembly. The protein is Centrosomal protein 15 of Homo sapiens (Human).